The sequence spans 179 residues: tRNA (cytidine(56)-2'-O)-methyltransferase (179 aa).

S-adenosyl-L-methionine is bound by residues L82, 112-116, and 130-137; these read GAEKV and VGNQPHSE.

It belongs to the aTrm56 family. Homodimer.

The protein localises to the cytoplasm. It carries out the reaction cytidine(56) in tRNA + S-adenosyl-L-methionine = 2'-O-methylcytidine(56) in tRNA + S-adenosyl-L-homocysteine + H(+). Specifically catalyzes the AdoMet-dependent 2'-O-ribose methylation of cytidine at position 56 in tRNAs. The polypeptide is tRNA (cytidine(56)-2'-O)-methyltransferase (Methanococcus maripaludis (strain DSM 14266 / JCM 13030 / NBRC 101832 / S2 / LL)).